Consider the following 693-residue polypeptide: Polyribonucleotide nucleotidyltransferase (693 aa).

Mg(2+) is bound by residues aspartate 489 and aspartate 495. One can recognise a KH domain in the interval 556-615; the sequence is PQIHVMNINPAKIKDVVGRGGATVKGIVEKTGAQIDTSDSGEVKVFAKDKKSMDMAVAMI. Residues 625 to 693 form the S1 motif domain; the sequence is GQVYKGKIVK…GRVKLSLVAR (69 aa).

This sequence belongs to the polyribonucleotide nucleotidyltransferase family. In terms of assembly, component of the RNA degradosome, which is a multiprotein complex involved in RNA processing and mRNA degradation. Mg(2+) is required as a cofactor.

It is found in the cytoplasm. The enzyme catalyses RNA(n+1) + phosphate = RNA(n) + a ribonucleoside 5'-diphosphate. Involved in mRNA degradation. Catalyzes the phosphorolysis of single-stranded polyribonucleotides processively in the 3'- to 5'-direction. The protein is Polyribonucleotide nucleotidyltransferase of Francisella tularensis subsp. tularensis (strain WY96-3418).